The primary structure comprises 85 residues: Translation initiation factor IF-1 2 (85 aa).

One can recognise an S1-like domain in the interval 1 to 72; sequence MAKEELIEMH…SKGRITFRHI (72 aa).

This sequence belongs to the IF-1 family. In terms of assembly, component of the 30S ribosomal translation pre-initiation complex which assembles on the 30S ribosome in the order IF-2 and IF-3, IF-1 and N-formylmethionyl-tRNA(fMet); mRNA recruitment can occur at any time during PIC assembly.

The protein resides in the cytoplasm. Its function is as follows. One of the essential components for the initiation of protein synthesis. Stabilizes the binding of IF-2 and IF-3 on the 30S subunit to which N-formylmethionyl-tRNA(fMet) subsequently binds. Helps modulate mRNA selection, yielding the 30S pre-initiation complex (PIC). Upon addition of the 50S ribosomal subunit IF-1, IF-2 and IF-3 are released leaving the mature 70S translation initiation complex. This Polaromonas sp. (strain JS666 / ATCC BAA-500) protein is Translation initiation factor IF-1 2.